Reading from the N-terminus, the 337-residue chain is Mycothiol acetyltransferase (337 aa).

N-acetyltransferase domains follow at residues 11–151 (LDER…FELP) and 154–337 (VRLR…MYRK). Residue glutamate 37 coordinates 1D-myo-inositol 2-(L-cysteinylamino)-2-deoxy-alpha-D-glucopyranoside. 81-83 (LVI) lines the acetyl-CoA pocket. A 1D-myo-inositol 2-(L-cysteinylamino)-2-deoxy-alpha-D-glucopyranoside-binding site is contributed by glutamate 182. A disordered region spans residues 210 to 246 (RPTGSGDGDVADGGSTDGGPADSGSADGGAGEGGTGD). The span at 221–234 (DGGSTDGGPADSGS) shows a compositional bias: low complexity. Residues 235-246 (ADGGAGEGGTGD) are compositionally biased toward gly residues. 1D-myo-inositol 2-(L-cysteinylamino)-2-deoxy-alpha-D-glucopyranoside contacts are provided by lysine 257 and glutamate 271. Acetyl-CoA is bound by residues 275–277 (VGV) and 282–288 (QGGGLGR). A 1D-myo-inositol 2-(L-cysteinylamino)-2-deoxy-alpha-D-glucopyranoside-binding site is contributed by tyrosine 309. Position 314 to 319 (314 to 319 (NTAAIR)) interacts with acetyl-CoA.

It belongs to the acetyltransferase family. MshD subfamily. As to quaternary structure, monomer.

It catalyses the reaction 1D-myo-inositol 2-(L-cysteinylamino)-2-deoxy-alpha-D-glucopyranoside + acetyl-CoA = mycothiol + CoA + H(+). Its function is as follows. Catalyzes the transfer of acetyl from acetyl-CoA to desacetylmycothiol (Cys-GlcN-Ins) to form mycothiol. The protein is Mycothiol acetyltransferase of Streptosporangium roseum (strain ATCC 12428 / DSM 43021 / JCM 3005 / KCTC 9067 / NCIMB 10171 / NRRL 2505 / NI 9100).